The chain runs to 242 residues: Triosephosphate isomerase (242 aa).

Substrate is bound at residue 8-10 (NWK). Residue His-98 is the Electrophile of the active site. Glu-167 (proton acceptor) is an active-site residue. Substrate contacts are provided by residues Gly-173, Ser-205, and 226–227 (GG).

Belongs to the triosephosphate isomerase family. As to quaternary structure, homodimer.

It is found in the cytoplasm. It carries out the reaction D-glyceraldehyde 3-phosphate = dihydroxyacetone phosphate. Its pathway is carbohydrate biosynthesis; gluconeogenesis. The protein operates within carbohydrate degradation; glycolysis; D-glyceraldehyde 3-phosphate from glycerone phosphate: step 1/1. Involved in the gluconeogenesis. Catalyzes stereospecifically the conversion of dihydroxyacetone phosphate (DHAP) to D-glyceraldehyde-3-phosphate (G3P). The protein is Triosephosphate isomerase of Mesomycoplasma hyopneumoniae (strain 232) (Mycoplasma hyopneumoniae).